A 194-amino-acid polypeptide reads, in one-letter code: HTH-type transcriptional regulator BetI (194 aa).

In terms of domain architecture, HTH tetR-type spans 8 to 68 (EIRRAQLIDA…ATMRHVLRDL (61 aa)). A DNA-binding region (H-T-H motif) is located at residues 31-50 (TLASVAQRANISTGIVSHYF).

It participates in amine and polyamine biosynthesis; betaine biosynthesis via choline pathway [regulation]. Repressor involved in the biosynthesis of the osmoprotectant glycine betaine. It represses transcription of the choline transporter BetT and the genes of BetAB involved in the synthesis of glycine betaine. This Burkholderia cenocepacia (strain HI2424) protein is HTH-type transcriptional regulator BetI.